The sequence spans 154 residues: Probable prefoldin subunit 5 (154 aa).

Belongs to the prefoldin subunit alpha family. As to quaternary structure, heterohexamer of two PFD-alpha type and four PFD-beta type subunits.

In terms of biological role, binds specifically to cytosolic chaperonin (c-CPN) and transfers target proteins to it. Binds to nascent polypeptide chain and promotes folding in an environment in which there are many competing pathways for nonnative proteins. This chain is Probable prefoldin subunit 5, found in Caenorhabditis briggsae.